Consider the following 199-residue polypeptide: Glycerol-3-phosphate acyltransferase (199 aa).

5 helical membrane-spanning segments follow: residues 5–25 (AYLL…IIFC), 54–74 (AAIG…LIAF), 82–102 (AIGL…FFQF), 114–134 (VFFS…LIVF), and 154–174 (YIWC…CLLI).

The protein belongs to the PlsY family. Probably interacts with PlsX.

It localises to the cell inner membrane. The enzyme catalyses an acyl phosphate + sn-glycerol 3-phosphate = a 1-acyl-sn-glycero-3-phosphate + phosphate. The protein operates within lipid metabolism; phospholipid metabolism. Catalyzes the transfer of an acyl group from acyl-phosphate (acyl-PO(4)) to glycerol-3-phosphate (G3P) to form lysophosphatidic acid (LPA). This enzyme utilizes acyl-phosphate as fatty acyl donor, but not acyl-CoA or acyl-ACP. This Haemophilus ducreyi (strain 35000HP / ATCC 700724) protein is Glycerol-3-phosphate acyltransferase.